Here is a 759-residue protein sequence, read N- to C-terminus: Phosphoribosylformylglycinamidine synthase subunit PurL (759 aa).

Residue His-46 is part of the active site. Residues Tyr-49 and Lys-88 each contribute to the ATP site. A Mg(2+)-binding site is contributed by Glu-90. Residues 91 to 94 and Arg-113 each bind substrate; that span reads SHNH. His-92 functions as the Proton acceptor in the catalytic mechanism. A Mg(2+)-binding site is contributed by Asp-114. Gln-237 serves as a coordination point for substrate. Mg(2+) is bound at residue Asp-265. 309 to 311 contributes to the substrate binding site; the sequence is ESQ. Asp-498 and Gly-535 together coordinate ATP. Asn-536 contacts Mg(2+). A substrate-binding site is contributed by Ser-538.

This sequence belongs to the FGAMS family. Monomer. Part of the FGAM synthase complex composed of 1 PurL, 1 PurQ and 2 PurS subunits.

The protein localises to the cytoplasm. The catalysed reaction is N(2)-formyl-N(1)-(5-phospho-beta-D-ribosyl)glycinamide + L-glutamine + ATP + H2O = 2-formamido-N(1)-(5-O-phospho-beta-D-ribosyl)acetamidine + L-glutamate + ADP + phosphate + H(+). The protein operates within purine metabolism; IMP biosynthesis via de novo pathway; 5-amino-1-(5-phospho-D-ribosyl)imidazole from N(2)-formyl-N(1)-(5-phospho-D-ribosyl)glycinamide: step 1/2. Part of the phosphoribosylformylglycinamidine synthase complex involved in the purines biosynthetic pathway. Catalyzes the ATP-dependent conversion of formylglycinamide ribonucleotide (FGAR) and glutamine to yield formylglycinamidine ribonucleotide (FGAM) and glutamate. The FGAM synthase complex is composed of three subunits. PurQ produces an ammonia molecule by converting glutamine to glutamate. PurL transfers the ammonia molecule to FGAR to form FGAM in an ATP-dependent manner. PurS interacts with PurQ and PurL and is thought to assist in the transfer of the ammonia molecule from PurQ to PurL. The polypeptide is Phosphoribosylformylglycinamidine synthase subunit PurL (Anaeromyxobacter dehalogenans (strain 2CP-C)).